A 155-amino-acid polypeptide reads, in one-letter code: Egg cell-secreted protein 1.5 (155 aa).

The signal sequence occupies residues 1–32; it reads MATKSTSKPLLLSFLMMSYLISTFHVITVAEG.

It belongs to the plant egg cell-secreted peptide family. Restricted to female reproductive tissues, specifically accumulating in storage vesicles of the unfertilized egg cell.

Its subcellular location is the cytoplasmic vesicle. It localises to the secreted. Functionally, involved in the regulation of gamete interactions during the double fertilization and to prevent multiple-pollen tube attraction; mediates the redistribution of the gamete fusogen HAP2/GCS1 to the cell surface after secretion upon sperm arrival. The polypeptide is Egg cell-secreted protein 1.5 (EC1.5) (Arabidopsis thaliana (Mouse-ear cress)).